We begin with the raw amino-acid sequence, 200 residues long: Peroxiredoxin (200 aa).

A Thioredoxin domain is found at 6 to 166 (ARIGHLAPGF…ILRLVQAFQF (161 aa)). The active-site Cysteine sulfenic acid (-SOH) intermediate is C52.

This sequence belongs to the peroxiredoxin family. AhpC/Prx1 subfamily. Homodimer; disulfide-linked, upon oxidation.

The enzyme catalyses a hydroperoxide + [thioredoxin]-dithiol = an alcohol + [thioredoxin]-disulfide + H2O. Thiol-specific peroxidase that catalyzes the reduction of hydrogen peroxide and organic hydroperoxides to water and alcohols, respectively. Plays a role in cell protection against oxidative stress by detoxifying peroxides and as sensor of hydrogen peroxide-mediated signaling events. In Oncorhynchus mykiss (Rainbow trout), this protein is Peroxiredoxin.